Consider the following 206-residue polypeptide: 2-phospho-L-lactate guanylyltransferase (206 aa).

Belongs to the CofC family. Homodimer.

The enzyme catalyses (2S)-2-phospholactate + GTP + H(+) = (2S)-lactyl-2-diphospho-5'-guanosine + diphosphate. It participates in cofactor biosynthesis; coenzyme F420 biosynthesis. Functionally, guanylyltransferase that catalyzes the activation of (2S)-2-phospholactate (2-PL) as (2S)-lactyl-2-diphospho-5'-guanosine, via the condensation of 2-PL with GTP. It is involved in the biosynthesis of coenzyme F420, a hydride carrier cofactor. The polypeptide is 2-phospho-L-lactate guanylyltransferase (Haloferax volcanii (strain ATCC 29605 / DSM 3757 / JCM 8879 / NBRC 14742 / NCIMB 2012 / VKM B-1768 / DS2) (Halobacterium volcanii)).